The primary structure comprises 108 residues: Urease subunit beta (108 aa).

This sequence belongs to the urease beta subunit family. As to quaternary structure, heterotrimer of UreA (gamma), UreB (beta) and UreC (alpha) subunits. Three heterotrimers associate to form the active enzyme.

Its subcellular location is the cytoplasm. It carries out the reaction urea + 2 H2O + H(+) = hydrogencarbonate + 2 NH4(+). It participates in nitrogen metabolism; urea degradation; CO(2) and NH(3) from urea (urease route): step 1/1. The sequence is that of Urease subunit beta from Trichormus variabilis (strain ATCC 29413 / PCC 7937) (Anabaena variabilis).